The following is a 234-amino-acid chain: Toxic shock syndrome toxin-1 (234 aa).

The N-terminal stretch at 1–40 (MNKKLLMNFFIVSPLLLATTATDFTPVPLSSNQIIKTAKA) is a signal peptide.

Belongs to the staphylococcal/streptococcal toxin family.

The protein resides in the secreted. Functionally, responsible for the symptoms of toxic shock syndrome. This is Toxic shock syndrome toxin-1 (tst) from Staphylococcus aureus.